Consider the following 716-residue polypeptide: ATP-dependent DNA helicase DinG (716 aa).

Residues Ala-17 to Thr-294 enclose the Helicase ATP-binding domain. Ala-54–Thr-61 is an ATP binding site. Cys-120 provides a ligand contact to [4Fe-4S] cluster. Residues Glu-131–Gln-134 carry the DEAH box motif. Residues Cys-194, Cys-199, and Cys-205 each coordinate [4Fe-4S] cluster. The short motif at Asp-248 to His-251 is the DEAH box element. One can recognise a Helicase C-terminal domain in the interval Ala-487 to Pro-698.

Belongs to the helicase family. DinG subfamily. Type 1 sub-subfamily. [4Fe-4S] cluster serves as cofactor.

The catalysed reaction is Couples ATP hydrolysis with the unwinding of duplex DNA at the replication fork by translocating in the 5'-3' direction. This creates two antiparallel DNA single strands (ssDNA). The leading ssDNA polymer is the template for DNA polymerase III holoenzyme which synthesizes a continuous strand.. The enzyme catalyses ATP + H2O = ADP + phosphate + H(+). DNA-dependent ATPase and 5'-3' DNA helicase. Unwinds D-loops, R-loops, forked DNA and G-quadruplex DNA. This Shigella flexneri protein is ATP-dependent DNA helicase DinG.